A 705-amino-acid polypeptide reads, in one-letter code: Rab guanine nucleotide exchange factor sec2 (705 aa).

Residues 144–285 adopt a coiled-coil conformation; that stretch reads QTTLDDNLVA…KSVMQGMNIA (142 aa).

This sequence belongs to the SEC2 family.

In terms of biological role, guanine nucleotide exchange factor that plays an important role in regulating the growth and virulence, probably by regulating the autophagy pathway. Affects the sensitivity to cell wall disruptors and the cell wall thickness by regulating the expression levels of the cell wall integrity (CWI) pathway genes, thus coordinating the growth and virulence. Positively regulates the autophagy pathway to enhance the expression of CWI pathway genes in the presence of autophagy inducers. The chain is Rab guanine nucleotide exchange factor sec2 from Aspergillus fumigatus (strain ATCC MYA-4609 / CBS 101355 / FGSC A1100 / Af293) (Neosartorya fumigata).